A 229-amino-acid polypeptide reads, in one-letter code: Uracil-DNA glycosylase (229 aa).

Residue Asp-64 is the Proton acceptor of the active site.

It belongs to the uracil-DNA glycosylase (UDG) superfamily. UNG family.

It is found in the cytoplasm. The catalysed reaction is Hydrolyzes single-stranded DNA or mismatched double-stranded DNA and polynucleotides, releasing free uracil.. Its function is as follows. Excises uracil residues from the DNA which can arise as a result of misincorporation of dUMP residues by DNA polymerase or due to deamination of cytosine. In Klebsiella pneumoniae subsp. pneumoniae (strain ATCC 700721 / MGH 78578), this protein is Uracil-DNA glycosylase.